Here is a 684-residue protein sequence, read N- to C-terminus: Phenoloxidase 1 (684 aa).

The propeptide at 1–50 (MSDKNKLLLLFDRPLETVIVPRGPDQEAFDVPVDLLSDRYKAIGVQVSNR) is removed by PPAF1. Asparagine 80 carries N-linked (GlcNAc...) asparagine glycosylation. The Cu cation site is built by histidine 208, histidine 212, and histidine 237. Glutamate 349 functions as the Proton acceptor in the catalytic mechanism. Asparagine 352 and asparagine 356 each carry an N-linked (GlcNAc...) asparagine glycan. Residues histidine 364, histidine 368, and histidine 404 each contribute to the Cu cation site. 3 N-linked (GlcNAc...) asparagine glycosylation sites follow: asparagine 486, asparagine 491, and asparagine 545. Disulfide bonds link cysteine 579-cysteine 621 and cysteine 581-cysteine 628.

This sequence belongs to the tyrosinase family. Dimer. Might form a homodimer or a heterodimer with PPO1. Might interact with PPAF2 (via CLIP domain); the interaction might be required for PPO1 activity. Cu(2+) serves as cofactor. Post-translationally, propeptide cleaved by PPAF1. Hemocytes.

It is found in the secreted. In terms of biological role, this is a copper-containing oxidase that functions in the formation of pigments such as melanins and other polyphenolic compounds. Catalyzes the oxidation of o-diphenols (N-acetyldopamine, 4-methylcatechol and dopamine). Cannot oxidize monophenols and p-phenols (L-tyrosine, tyramine, gentisic acid and hydroquinone). Binds to the surface of hemocytes and is involved in hemocyte melanization. Activation of the enzyme in response to bacterial lipopolysaccharides (LPS) suggests it may play a role in innate immunity. The sequence is that of Phenoloxidase 1 from Holotrichia diomphalia (Korean black chafer).